The sequence spans 718 residues: Methionine--tRNA ligase (718 aa).

The 'HIGH' region motif lies at 27-37 (PYANGQIHIGH). Zn(2+)-binding residues include Cys158, Cys161, Cys171, and Cys174. A 'KMSKS' region motif is present at residues 348 to 352 (KMSKS). Position 351 (Lys351) interacts with ATP. One can recognise a tRNA-binding domain in the interval 612 to 718 (DFAKIDLRIA…SGAKPGMRVK (107 aa)).

This sequence belongs to the class-I aminoacyl-tRNA synthetase family. MetG type 1 subfamily. As to quaternary structure, homodimer. The cofactor is Zn(2+).

The protein localises to the cytoplasm. The enzyme catalyses tRNA(Met) + L-methionine + ATP = L-methionyl-tRNA(Met) + AMP + diphosphate. Its function is as follows. Is required not only for elongation of protein synthesis but also for the initiation of all mRNA translation through initiator tRNA(fMet) aminoacylation. This Burkholderia thailandensis (strain ATCC 700388 / DSM 13276 / CCUG 48851 / CIP 106301 / E264) protein is Methionine--tRNA ligase.